Consider the following 203-residue polypeptide: NAD(P)H dehydrogenase (quinone) (203 aa).

One can recognise a Flavodoxin-like domain in the interval 3 to 194; sequence VLIAYYSMYG…AAARYQGKHV (192 aa). FMN contacts are provided by residues 9-14 and 82-84; these read SMYGHI and TRF. An NAD(+)-binding site is contributed by tyrosine 11. Tryptophan 102 serves as a coordination point for substrate. Residues 117–123 and histidine 138 contribute to the FMN site; that span reads SSATQHG.

It belongs to the WrbA family. Requires FMN as cofactor.

The catalysed reaction is a quinone + NADH + H(+) = a quinol + NAD(+). The enzyme catalyses a quinone + NADPH + H(+) = a quinol + NADP(+). The chain is NAD(P)H dehydrogenase (quinone) from Geotalea uraniireducens (strain Rf4) (Geobacter uraniireducens).